The following is a 184-amino-acid chain: Shikimate kinase (184 aa).

Residue 17-22 (GAGKTT) participates in ATP binding. Residue T21 coordinates Mg(2+). Substrate-binding residues include D39, R63, and G85. Residue R123 participates in ATP binding. Substrate is bound at residue R142.

Belongs to the shikimate kinase family. As to quaternary structure, monomer. Mg(2+) serves as cofactor.

Its subcellular location is the cytoplasm. The catalysed reaction is shikimate + ATP = 3-phosphoshikimate + ADP + H(+). It functions in the pathway metabolic intermediate biosynthesis; chorismate biosynthesis; chorismate from D-erythrose 4-phosphate and phosphoenolpyruvate: step 5/7. Functionally, catalyzes the specific phosphorylation of the 3-hydroxyl group of shikimic acid using ATP as a cosubstrate. This chain is Shikimate kinase, found in Burkholderia thailandensis (strain ATCC 700388 / DSM 13276 / CCUG 48851 / CIP 106301 / E264).